The sequence spans 124 residues: SETAAEKFERQHMDSYSSSSSNSNYCNQMMKRREMTDGWCKPVNTFIHESLEDVQAVCSQKSVTCKNGQTNCHQSSTTMHITDCRETGSSKYPNCAYKASNLKKHIIIACEGNPYVPVHFDASV.

Over residues Ser-1 to Met-13 the composition is skewed to basic and acidic residues. The disordered stretch occupies residues Ser-1–Ser-23. Residues Lys-7 and Arg-10 each coordinate substrate. Catalysis depends on His-12, which acts as the Proton acceptor. Cystine bridges form between Cys-26-Cys-84, Cys-40-Cys-95, Cys-58-Cys-110, and Cys-65-Cys-72. Residues Lys-41–Thr-45, Lys-66, and Arg-85 contribute to the substrate site. Catalysis depends on His-119, which acts as the Proton donor.

This sequence belongs to the pancreatic ribonuclease family. Monomer. Interacts with and forms tight 1:1 complexes with RNH1. Dimerization of two such complexes may occur. Interaction with RNH1 inhibits this protein. As to expression, pancreas.

Its subcellular location is the secreted. The enzyme catalyses an [RNA] containing cytidine + H2O = an [RNA]-3'-cytidine-3'-phosphate + a 5'-hydroxy-ribonucleotide-3'-[RNA].. It catalyses the reaction an [RNA] containing uridine + H2O = an [RNA]-3'-uridine-3'-phosphate + a 5'-hydroxy-ribonucleotide-3'-[RNA].. Endonuclease that catalyzes the cleavage of RNA on the 3' side of pyrimidine nucleotides. Acts on single-stranded and double-stranded RNA. The polypeptide is Ribonuclease pancreatic (RNASE1) (Camelus dromedarius (Dromedary)).